Consider the following 439-residue polypeptide: Protein ABHD8 (439 aa).

Disordered regions lie at residues 54-75 and 122-148; these read HAGPAPIPTPPPPPPEDDPGVK and ELAEPAGGDTRANPGSGRRRRPRRPKR. A compositionally biased stretch (pro residues) spans 58 to 67; sequence APIPTPPPPP. A compositionally biased stretch (basic residues) spans 138–148; the sequence is GRRRRPRRPKR. The 103-residue stretch at 169–271 folds into the AB hydrolase-1 domain; the sequence is VLFFIHGVGG…HKVIMINGGG (103 aa). Active-site charge relay system residues include S244, D362, and H390. The disordered stretch occupies residues 415-439; sequence EAEPKLEPKPKPQLLQPEPAPGEEK.

The protein belongs to the AB hydrolase superfamily. As to quaternary structure, interacts with NLRP3 (via NACHT and LLR domains); this interaction is enhanced in the presence of NLRP3 inflammasome inducers, such as ATP, nigericin, silica, or alum. Interacts with ZDHHC12.

It localises to the cytoplasm. Functionally, negatively regulates NLRP3-driven inflammation. Promotes NLRP3 degradation through the chaperone-mediated autophagy (CMA) pathway, hence attenuating inflammasome activation and IL1B secretion. Acts by recruiting palmitoyltransferase ZDHHC12 to NLRP3, facilitating NLRP3 palmitoylation and subsequent degradation. The sequence is that of Protein ABHD8 from Mus musculus (Mouse).